The chain runs to 646 residues: Preterminal protein (646 aa).

The Nuclear localization signal motif lies at 357 to 366; that stretch reads RLPVRRRRRR. Ser555 carries the post-translational modification O-(5'-phospho-DNA)-serine. The interval 619–646 is disordered; sequence LHADVPLPPLQANPHPPLPPDARPQRTM. Residues 624–640 are compositionally biased toward pro residues; sequence PLPPLQANPHPPLPPDA.

This sequence belongs to the adenoviridae terminal protein family. Heterodimer with the polymerase; this heterodimer binds to bp 9 to 18 of the genome. Interacts with host POU2F1; POU2F1 binds to the auxiliary sequences in the inverted terminal repeats and tethers the pTP-POL heterodimer to the origin DNA thereby participating in the assembly of the pre-initiation complex (POL-TP-DBP-NFIA-POU2F1). Preterminal protein is used to replicate viral genome, upon genomic encapsidation it is processed first into iTP and finally into TP by adenovirus protease.

It localises to the host nucleus matrix. Functionally, protein covalently bound to the viral DNA that acts as a primer for viral genomic replication by DNA strand displacement. Assembles on the viral origin of replication in an initiation complex with viral polymerase, DBP, host NFIA and host POU2F1/OCT1. During initiation, the polymerase covalently couples the first dCTP with Ser-580 of pTP. The terminal protein stimulates the template activity over 20 fold compared to protein-free templates. Neo-synthesized viral genomes are linked to two preterminal proteins, one for each 5' end. These new genomes are encapsidated in the nucleus, and during capsid maturation by viral protease, preterminal protein is first cleaved into intermediary (iTP), then into mature TP. May play a role in host nuclear matrix localization of genomic DNA. The protein is Preterminal protein of Homo sapiens (Human).